We begin with the raw amino-acid sequence, 350 residues long: Deoxyhypusine synthase-like protein (350 aa).

The protein belongs to the deoxyhypusine synthase family.

This chain is Deoxyhypusine synthase-like protein, found in Chlorobaculum parvum (strain DSM 263 / NCIMB 8327) (Chlorobium vibrioforme subsp. thiosulfatophilum).